The primary structure comprises 366 residues: Ribosome-binding ATPase YchF (366 aa).

Positions 3–259 constitute an OBG-type G domain; the sequence is LTAGIVGLPN…LEGEEKQMFL (257 aa). Position 12 to 17 (12 to 17) interacts with ATP; it reads NVGKST. Mg(2+)-binding residues include Ser-16 and Thr-36. A TGS domain is found at 281–364; the sequence is GLATYFTAGE…QDGDVIHFRF (84 aa).

It belongs to the TRAFAC class OBG-HflX-like GTPase superfamily. OBG GTPase family. YchF/OLA1 subfamily. The cofactor is Mg(2+).

ATPase that binds to both the 70S ribosome and the 50S ribosomal subunit in a nucleotide-independent manner. The chain is Ribosome-binding ATPase YchF from Bacillus subtilis (strain 168).